The primary structure comprises 122 residues: Large ribosomal subunit protein uL14 (122 aa).

It belongs to the universal ribosomal protein uL14 family. Part of the 50S ribosomal subunit. Forms a cluster with proteins L3 and L19. In the 70S ribosome, L14 and L19 interact and together make contacts with the 16S rRNA in bridges B5 and B8.

Functionally, binds to 23S rRNA. Forms part of two intersubunit bridges in the 70S ribosome. This chain is Large ribosomal subunit protein uL14, found in Lachnospira eligens (strain ATCC 27750 / DSM 3376 / VPI C15-48 / C15-B4) (Eubacterium eligens).